The following is a 187-amino-acid chain: Troponin I, slow skeletal muscle (187 aa).

An N-acetylproline modification is found at P2. The segment at 2 to 48 is involved in binding TNC; that stretch reads PEVERKPKITASRKLLLKSLMLAKAKECWEQEHEEREAEKVRYLAER. Position 58 is a phosphoserine (S58). Positions 97-118 are involved in binding TNC and actin; it reads LKLKVMDLRGKFKRPPLRRVRV.

The protein belongs to the troponin I family. Binds to actin and tropomyosin. In terms of tissue distribution, highest levels observed in human skeletal muscle (e.g. gastrocnemious muscle), differentiated cultures of primary human muscle cells and rhabdomyosarcoma cells cultured in low serum medium. Expressed in C2 muscle cell myoblasts and myotubes.

Troponin I is the inhibitory subunit of troponin, the thin filament regulatory complex which confers calcium-sensitivity to striated muscle actomyosin ATPase activity. This chain is Troponin I, slow skeletal muscle (TNNI1), found in Homo sapiens (Human).